The sequence spans 59 residues: MAGRNKAKPRLSKKEKEERRKDMAEVQEKVFSVVVPVVVAFTVVIMLIVYLKTRPRTDF.

Basic residues predominate over residues 1–11 (MAGRNKAKPRL). A disordered region spans residues 1 to 20 (MAGRNKAKPRLSKKEKEERR). A coiled-coil region spans residues 10-30 (RLSKKEKEERRKDMAEVQEKV). Residues 30 to 50 (VFSVVVPVVVAFTVVIMLIVY) traverse the membrane as a helical segment.

The protein belongs to the SMCO4 family.

The protein resides in the membrane. This is Single-pass membrane and coiled-coil domain-containing protein 4 homolog from Argas monolakensis (Mono lake bird tick).